A 2336-amino-acid chain; its full sequence is MGWICPNVSCLGHTSVLSNKEISREGRCERAMCGSLLVKVAVPQQPAKKKKQATPAPRPTYPPCVVEKTAATPVTVEKVFVEVIPTVPSCLAPKWMLGIQRVEGAPSKAPKQAVPKWVWQMRQLLKAALTGANSFGPRYVRAHFSRARISWIYAQLCEGCPLPLWNRGRALKKSSLALLARIEDTKQQKRAAWEKKEAAPLKSKREYEQKRALLIPLIEKLRARLLQDEARELREQLFPSGNGGTDTTKVAAASKAEIKAAAQLKAYQDVCAKVWRVKRQEKKAQQAKLVEDLITSANCGKQDVSEPAIEKAARPKRRIEIGDFVPQKTLWGLYPCVGLGANMADPVCRVLSACVSIAGKRPDLVSTIYAFITGEAQVWLSAPRVCMLAKRIIELSDWYPHELLAEELKKISDEENCKEAEREINLKYLEISKATENMRANGLFNKLKGKAQDLWSGIVDFASHPFRKYLATAAEFVEGFSHRVVDAVMSRVNAAIAQFAAQLDIAKTLVDQLVIHVKRWYTSLCTSFDDSLKLLGKWAGYALGLIVGVGVCHLVEVICAHMGLPLGGVITGVFTTAYMGWLFVKTPVGSELVMNLRMQVARIARNIFDVQRTGIPPDLPANPNVGFSVPYEAFGGIDNQPFSMGADVPNARAIPVVSPIINAMAGFGASMLSMKAMGLIEMGKLGAACHSLRMGKDALCEFVSTVLYYFGRLADKVTGRETEFFDELSILVQIDVKDWITRSRGVLLDSCYTSLNNMICSDVVNKLVTDGEQIASNIAGTPRRLSLDFGQLVSSIMKDLLDLQQRIVRHGVTVGRRKEPTWIYIFGPSHCGKSNMMDHLTSEVCRYFDLPYTYIARNGQDNFFTTGYKRQTVLQIDDLSCVENVPPIERELINLVSCSEYPLKMADLSDKSISFQSPFIISTSNQRTCLPTCGITHCEAFNNRRAVVVEMRRKPGVVFDPMDCHAAMQGRFLDKRDHTPLFGVQGQPETFWKDVPEMTTILLNICVAHRQEQDILQEQHIRKHAVNDPLILASERFLKQESRKALCYMPRVEMEICGVQSQAAGCYYLCVDQKLYTCEDDGNLVETPCLNPSYAQWERNSSENFVGGVQALDALECRSILVSGILRNLVQGQCCVLSIDEMSRLPLCTQRLFKALQLQERVYLRLIQKKISHILSVDESNVYSKNAWMRCLEFAAASRDYLKEHGLEVLLLLAAMMILCVALYYFVGAFIGVMGGALSMGAAMAGLKEVDMKAQYSSGAQEGRYRSRNIPIRQRYRYARGELDEEVPLGGQLAVALYGSQGRFISALQYKGKSVMLTRHQMLMFAEKERVTCIYLATGESVVLTFNRDDVQEFPNHETCMWQAAGMLQLPAKFKDCFLEKGETELAPAFELEGYVLRPDSTAFIMTILKTWARVQYEPFVVRGSLAKEKYVNELPTSIWFQYQSRNNDCGMVCLAQVGGKKKIVGLLVAGVDQQTWADNLPNPCMAEMKSQIEYEFKLGAHTEGYTKLGYLTKDKTPHLPKKNNAVLVKPEYRIDSPVPIKEPSIISAEDPRCPKDAEGKPIDPIVKAFEKKFTTPMDLLEDDILESIAQEMVDEWQDCESEPLCDVPLEVAINGIPGTQIDDDDEFEDAVECLKMRTSPGYPYVLHKEPGMKGKEAYFELAPDGTRALKEGSLAAELYENIVQYSKSAIPELVVIECPKDELLKTEKVNKACRPFEIMPLHYNLFLREKTLAFSLFQQRNRHKLACQVGTKAYSHDWTHMYQRLVAKSDRAINCDYSSFDGLLNSQVVSCIANMINSMYHSPEETVVSKRQRYNMINALFGRLAITGQEVMRVRAGLPSGFALTVVINSVFNEILMRYCFKVLVLGPQRNSFSTYVTLLVYGDDNLMSCTDKIAIYFNGETIKETLKKKNVTITDGSDKTAPDIKWKTLGELDFLKRRFLKLETGVVQAPLDLTAIFSCLHWVTPHPQKMPKGGAQLQVENVDTLYELALNVQVALTELYLHGNKEEFQRVRNFYTKKMNILPAGYYTWADREAFHMSKQTGMEAYQPAKEIDLDVGQEFARFMHTSDIGNQVHFTRQCLVVAGPFYKPTPDQLLVSTTPLKQGESGYWVPVETGMGIGNLPTIAWVHRFMRPTQLVDAYGYKIWGNVRSHIESGKSLVFRSEAPYVAGNAALMAFGQAAKLLEIKTALNLYRNVIPESTYGLEQYFDAAIPQASLPGTFYLANAESESLLQEHKTGTVIGLTTEKFNLNGARDLIMQGQKLGKLPVMAATQAPNKFYVGLCCQKNFCPGHATSSDSIAKAFSQCWAMRCAPNSSSRKVTFEPEWRKNKFLGIS.

Topologically, residues 599–1210 are cytoplasmic; that stretch reads QVARIARNIF…YLKEHGLEVL (612 aa). An SF3 helicase domain is found at 797–964; sequence MKDLLDLQQR…PGVVFDPMDC (168 aa). An ATP-binding site is contributed by 827–834; it reads GPSHCGKS. The chain crosses the membrane as a helical span at residues 1211-1231; sequence LLLAAMMILCVALYYFVGAFI. Residues 1232–1253 lie on the Lumenal side of the membrane; sequence GVMGGALSMGAAMAGLKEVDMK. A Peptidase C3 domain is found at 1278-1486; the sequence is YARGELDEEV…WADNLPNPCM (209 aa). Residues His1320, Glu1358, and Cys1450 each act as for picornain 3C-like protease activity in the active site. The region spanning 1771–1899 is the RdRp catalytic domain; the sequence is DRAINCDYSS…SCTDKIAIYF (129 aa).

The protein belongs to the nepoviruses RNA1 polyprotein family. In terms of processing, specific enzymatic cleavages by picornain 3C-like protease in vivo yield mature proteins. Picornain 3C-like protease is autocatalytically processed. VPg is uridylylated by the polymerase and is covalently linked to the 5'-end of genomic RNA. This uridylylated form acts as a nucleotide-peptide primer for the polymerase.

The protein localises to the host endoplasmic reticulum lumen. It localises to the host endoplasmic reticulum membrane. The enzyme catalyses RNA(n) + a ribonucleoside 5'-triphosphate = RNA(n+1) + diphosphate. Picornain 3C-like protease is a thiol protease that cleaves the P1 and P2 polyproteins. This chain is RNA1 polyprotein, found in Cycas necrotic stunt virus (CNSV).